A 266-amino-acid chain; its full sequence is Phosphoethanolamine N-methyltransferase (266 aa).

A phosphoethanolamine-binding site is contributed by Q18. Y19 is an active-site residue. Position 27 (Y27) interacts with phosphoethanolamine. Residues I36, S37, G63, D85, I86, D110, I111, and R127 each coordinate S-adenosyl-L-methionine. H132 is a catalytic residue. The phosphoethanolamine site is built by Y160, Y175, R179, Y181, and K247.

Belongs to the class I-like SAM-binding methyltransferase superfamily. PEAMT family. In terms of assembly, monomer.

It localises to the golgi apparatus membrane. The protein resides in the cytoplasm. The enzyme catalyses phosphoethanolamine + S-adenosyl-L-methionine = N-methylethanolamine phosphate + S-adenosyl-L-homocysteine + H(+). The catalysed reaction is N-methylethanolamine phosphate + S-adenosyl-L-methionine = N,N-dimethylethanolamine phosphate + S-adenosyl-L-homocysteine + H(+). It carries out the reaction N,N-dimethylethanolamine phosphate + S-adenosyl-L-methionine = phosphocholine + S-adenosyl-L-homocysteine + H(+). Its pathway is phospholipid metabolism; phosphatidylcholine biosynthesis; phosphocholine from phosphoethanolamine. Its activity is regulated as follows. Inhibited by phosphocholine. Inhibited by hexadecylphosphocholine (miltefosine). Inhibited by S-adenosyl-l-homocysteine. Weakly inhibited in vitro by amodiaquine, chloroquine and primaquine. Inhibited by NSC-158011. Its function is as follows. Catalyzes N-methylation of phosphoethanolamine, phosphomonomethylethanolamine and phosphodimethylethanolamine, the three methylation steps required to convert phosphoethanolamine to phosphocholine. Has no ethanolamine- or phosphatidylethanolamine-N-methyltransferase activity. Required for gametocyte development, maturation and transmission to mosquitoes and for oocyst formation in the mosquito midgut. The chain is Phosphoethanolamine N-methyltransferase from Plasmodium falciparum (isolate 3D7).